Reading from the N-terminus, the 1154-residue chain is DNA-directed RNA polymerase subunit beta (1154 aa).

Basic and acidic residues predominate over residues 1108–1123; sequence ELGIDIQGEDRSERAG. Residues 1108–1136 form a disordered region; that stretch reads ELGIDIQGEDRSERAGEPASPDEMDDEEE. The segment covering 1127-1136 has biased composition (acidic residues); it reads SPDEMDDEEE.

It belongs to the RNA polymerase beta chain family. In terms of assembly, the RNAP catalytic core consists of 2 alpha, 1 beta, 1 beta' and 1 omega subunit. When a sigma factor is associated with the core the holoenzyme is formed, which can initiate transcription.

The catalysed reaction is RNA(n) + a ribonucleoside 5'-triphosphate = RNA(n+1) + diphosphate. Its function is as follows. DNA-dependent RNA polymerase catalyzes the transcription of DNA into RNA using the four ribonucleoside triphosphates as substrates. The sequence is that of DNA-directed RNA polymerase subunit beta from Heliobacterium modesticaldum (strain ATCC 51547 / Ice1).